The chain runs to 598 residues: Probable translation initiation factor IF-2 (598 aa).

Residues 3 to 225 form the tr-type G domain; that stretch reads LRCPIVSVLG…GLAQKFLEQK (223 aa). A G1 region spans residues 12–19; that stretch reads GHVDHGKT. 12–19 is a binding site for GTP; sequence GHVDHGKT. Residues 37–41 are G2; it reads GITQH. A G3 region spans residues 76–79; the sequence is DTPG. Residues 76-80 and 130-133 each bind GTP; these read DTPGH and NKVD. A G4 region spans residues 130 to 133; sequence NKVD. Positions 200–202 are G5; sequence SAM.

This sequence belongs to the TRAFAC class translation factor GTPase superfamily. Classic translation factor GTPase family. IF-2 subfamily.

In terms of biological role, function in general translation initiation by promoting the binding of the formylmethionine-tRNA to ribosomes. Seems to function along with eIF-2. The chain is Probable translation initiation factor IF-2 from Methanococcus maripaludis (strain C7 / ATCC BAA-1331).